We begin with the raw amino-acid sequence, 455 residues long: 23S rRNA (uracil(1939)-C(5))-methyltransferase RlmD (455 aa).

Residues 12-70 enclose the TRAM domain; that stretch reads SKQLSAKLSLSVTQLDHLGAGIAQHQGKIVFIPGVLPGETATVQFVEQKKSYAKAKLIS. [4Fe-4S] cluster is bound by residues Cys83, Cys89, Cys92, and Cys174. 6 residues coordinate S-adenosyl-L-methionine: Gln288, Phe317, Asn322, Glu338, Asp365, and Asp385. Cys411 acts as the Nucleophile in catalysis.

This sequence belongs to the class I-like SAM-binding methyltransferase superfamily. RNA M5U methyltransferase family. RlmD subfamily.

It carries out the reaction uridine(1939) in 23S rRNA + S-adenosyl-L-methionine = 5-methyluridine(1939) in 23S rRNA + S-adenosyl-L-homocysteine + H(+). In terms of biological role, catalyzes the formation of 5-methyl-uridine at position 1939 (m5U1939) in 23S rRNA. This Shewanella frigidimarina (strain NCIMB 400) protein is 23S rRNA (uracil(1939)-C(5))-methyltransferase RlmD.